A 183-amino-acid polypeptide reads, in one-letter code: ATP synthase subunit delta (183 aa).

Belongs to the ATPase delta chain family. In terms of assembly, F-type ATPases have 2 components, F(1) - the catalytic core - and F(0) - the membrane proton channel. F(1) has five subunits: alpha(3), beta(3), gamma(1), delta(1), epsilon(1). F(0) has three main subunits: a(1), b(2) and c(10-14). The alpha and beta chains form an alternating ring which encloses part of the gamma chain. F(1) is attached to F(0) by a central stalk formed by the gamma and epsilon chains, while a peripheral stalk is formed by the delta and b chains.

It is found in the cell inner membrane. Functionally, f(1)F(0) ATP synthase produces ATP from ADP in the presence of a proton or sodium gradient. F-type ATPases consist of two structural domains, F(1) containing the extramembraneous catalytic core and F(0) containing the membrane proton channel, linked together by a central stalk and a peripheral stalk. During catalysis, ATP synthesis in the catalytic domain of F(1) is coupled via a rotary mechanism of the central stalk subunits to proton translocation. Its function is as follows. This protein is part of the stalk that links CF(0) to CF(1). It either transmits conformational changes from CF(0) to CF(1) or is implicated in proton conduction. The protein is ATP synthase subunit delta of Rickettsia prowazekii (strain Madrid E).